We begin with the raw amino-acid sequence, 321 residues long: UDP-N-acetylenolpyruvoylglucosamine reductase (321 aa).

The region spanning 39-205 (RTGGLAELFY…TAALLEGEPG (167 aa)) is the FAD-binding PCMH-type domain. Arginine 185 is an active-site residue. Serine 234 functions as the Proton donor in the catalytic mechanism. Glutamate 304 is a catalytic residue.

It belongs to the MurB family. It depends on FAD as a cofactor.

It is found in the cytoplasm. The enzyme catalyses UDP-N-acetyl-alpha-D-muramate + NADP(+) = UDP-N-acetyl-3-O-(1-carboxyvinyl)-alpha-D-glucosamine + NADPH + H(+). The protein operates within cell wall biogenesis; peptidoglycan biosynthesis. Functionally, cell wall formation. This is UDP-N-acetylenolpyruvoylglucosamine reductase from Bartonella quintana (strain Toulouse) (Rochalimaea quintana).